Here is a 112-residue protein sequence, read N- to C-terminus: T cell receptor alpha variable 13-1 (112 aa).

Residues 1-20 (MTSIRAVFIFLWLQLDLVNG) form the signal peptide. The 92-residue stretch at 21 to 112 (ENVEQHPSTL…DSAVYFCAAS (92 aa)) folds into the Ig-like domain. A disulfide bridge links cysteine 42 with cysteine 109. An N-linked (GlcNAc...) asparagine glycan is attached at asparagine 86.

In terms of assembly, alpha-beta TR is a heterodimer composed of an alpha and beta chain; disulfide-linked. The alpha-beta TR is associated with the transmembrane signaling CD3 coreceptor proteins to form the TR-CD3 (TcR or TCR). The assembly of alpha-beta TR heterodimers with CD3 occurs in the endoplasmic reticulum where a single alpha-beta TR heterodimer associates with one CD3D-CD3E heterodimer, one CD3G-CD3E heterodimer and one CD247 homodimer forming a stable octameric structure. CD3D-CD3E and CD3G-CD3E heterodimers preferentially associate with TR alpha and TR beta chains, respectively. The association of the CD247 homodimer is the last step of TcR assembly in the endoplasmic reticulum and is required for transport to the cell surface.

It localises to the cell membrane. Its function is as follows. V region of the variable domain of T cell receptor (TR) alpha chain that participates in the antigen recognition. Alpha-beta T cell receptors are antigen specific receptors which are essential to the immune response and are present on the cell surface of T lymphocytes. Recognize peptide-major histocompatibility (MH) (pMH) complexes that are displayed by antigen presenting cells (APC), a prerequisite for efficient T cell adaptive immunity against pathogens. Binding of alpha-beta TR to pMH complex initiates TR-CD3 clustering on the cell surface and intracellular activation of LCK that phosphorylates the ITAM motifs of CD3G, CD3D, CD3E and CD247 enabling the recruitment of ZAP70. In turn ZAP70 phosphorylates LAT, which recruits numerous signaling molecules to form the LAT signalosome. The LAT signalosome propagates signal branching to three major signaling pathways, the calcium, the mitogen-activated protein kinase (MAPK) kinase and the nuclear factor NF-kappa-B (NF-kB) pathways, leading to the mobilization of transcription factors that are critical for gene expression and essential for T cell growth and differentiation. The T cell repertoire is generated in the thymus, by V-(D)-J rearrangement. This repertoire is then shaped by intrathymic selection events to generate a peripheral T cell pool of self-MH restricted, non-autoaggressive T cells. Post-thymic interaction of alpha-beta TR with the pMH complexes shapes TR structural and functional avidity. The polypeptide is T cell receptor alpha variable 13-1 (Homo sapiens (Human)).